The primary structure comprises 187 residues: Large ribosomal subunit protein eL18B (187 aa).

T134 carries the post-translational modification Phosphothreonine. Phosphoserine is present on S136.

Belongs to the eukaryotic ribosomal protein eL18 family. As to quaternary structure, component of the large ribosomal subunit (LSU). Mature yeast ribosomes consist of a small (40S) and a large (60S) subunit. The 40S small subunit contains 1 molecule of ribosomal RNA (18S rRNA) and at least 33 different proteins. The large 60S subunit contains 3 rRNA molecules (25S, 5.8S and 5S rRNA) and at least 46 different proteins. eL18 interacts with NAP1.

The protein localises to the cytoplasm. Its function is as follows. Component of the ribosome, a large ribonucleoprotein complex responsible for the synthesis of proteins in the cell. The small ribosomal subunit (SSU) binds messenger RNAs (mRNAs) and translates the encoded message by selecting cognate aminoacyl-transfer RNA (tRNA) molecules. The large subunit (LSU) contains the ribosomal catalytic site termed the peptidyl transferase center (PTC), which catalyzes the formation of peptide bonds, thereby polymerizing the amino acids delivered by tRNAs into a polypeptide chain. The nascent polypeptides leave the ribosome through a tunnel in the LSU and interact with protein factors that function in enzymatic processing, targeting, and the membrane insertion of nascent chains at the exit of the ribosomal tunnel. This Schizosaccharomyces pombe (strain 972 / ATCC 24843) (Fission yeast) protein is Large ribosomal subunit protein eL18B (rpl1802).